The primary structure comprises 34 residues: Photosystem I reaction center subunit XII (34 aa).

A helical transmembrane segment spans residues 10 to 32; that stretch reads IFIALVVAAHAGVLAVRLCVSLY.

The protein belongs to the PsaM family.

The protein localises to the cellular thylakoid membrane. This is Photosystem I reaction center subunit XII from Synechococcus sp. (strain WH7803).